The following is a 571-amino-acid chain: Glutamate--tRNA ligase (571 aa).

A compositionally biased stretch (basic and acidic residues) spans 75–88 (GGPREDVARDKEGL). Positions 75–98 (GGPREDVARDKEGLKPLPGAEPGN) are disordered. Positions 105-115 (PNPSGPLHIGH) match the 'HIGH' region motif.

This sequence belongs to the class-I aminoacyl-tRNA synthetase family. Glutamate--tRNA ligase type 2 subfamily.

It is found in the cytoplasm. It catalyses the reaction tRNA(Glu) + L-glutamate + ATP = L-glutamyl-tRNA(Glu) + AMP + diphosphate. Its function is as follows. Catalyzes the attachment of glutamate to tRNA(Glu) in a two-step reaction: glutamate is first activated by ATP to form Glu-AMP and then transferred to the acceptor end of tRNA(Glu). This is Glutamate--tRNA ligase from Methanopyrus kandleri (strain AV19 / DSM 6324 / JCM 9639 / NBRC 100938).